A 563-amino-acid chain; its full sequence is Arginine--tRNA ligase (563 aa).

A 'HIGH' region motif is present at residues 121–131 (PNIAKPFSIGH).

The protein belongs to the class-I aminoacyl-tRNA synthetase family. As to quaternary structure, monomer.

Its subcellular location is the cytoplasm. It catalyses the reaction tRNA(Arg) + L-arginine + ATP = L-arginyl-tRNA(Arg) + AMP + diphosphate. This is Arginine--tRNA ligase from Streptococcus pyogenes serotype M6 (strain ATCC BAA-946 / MGAS10394).